Here is a 441-residue protein sequence, read N- to C-terminus: Methylenetetrahydrofolate--tRNA-(uracil-5-)-methyltransferase TrmFO (441 aa).

11–16 (GAGLAG) lines the FAD pocket.

It belongs to the MnmG family. TrmFO subfamily. FAD serves as cofactor.

Its subcellular location is the cytoplasm. It carries out the reaction uridine(54) in tRNA + (6R)-5,10-methylene-5,6,7,8-tetrahydrofolate + NADH + H(+) = 5-methyluridine(54) in tRNA + (6S)-5,6,7,8-tetrahydrofolate + NAD(+). It catalyses the reaction uridine(54) in tRNA + (6R)-5,10-methylene-5,6,7,8-tetrahydrofolate + NADPH + H(+) = 5-methyluridine(54) in tRNA + (6S)-5,6,7,8-tetrahydrofolate + NADP(+). Catalyzes the folate-dependent formation of 5-methyl-uridine at position 54 (M-5-U54) in all tRNAs. The protein is Methylenetetrahydrofolate--tRNA-(uracil-5-)-methyltransferase TrmFO of Lactiplantibacillus plantarum (strain ATCC BAA-793 / NCIMB 8826 / WCFS1) (Lactobacillus plantarum).